The following is a 180-amino-acid chain: Adenine phosphoribosyltransferase (180 aa).

The protein belongs to the purine/pyrimidine phosphoribosyltransferase family. As to quaternary structure, homodimer.

Its subcellular location is the cytoplasm. The catalysed reaction is AMP + diphosphate = 5-phospho-alpha-D-ribose 1-diphosphate + adenine. It functions in the pathway purine metabolism; AMP biosynthesis via salvage pathway; AMP from adenine: step 1/1. In terms of biological role, catalyzes a salvage reaction resulting in the formation of AMP, that is energically less costly than de novo synthesis. This chain is Adenine phosphoribosyltransferase, found in Marinobacter nauticus (strain ATCC 700491 / DSM 11845 / VT8) (Marinobacter aquaeolei).